The primary structure comprises 311 residues: Probable dihydroorotate dehydrogenase A (fumarate) (311 aa).

Residues Lys-45, 69–73, and Asn-128 contribute to the substrate site; that span reads NSMGL. Residue 45-46 participates in FMN binding; the sequence is KT. Asn-128 contributes to the FMN binding site. Cys-131 functions as the Nucleophile in the catalytic mechanism. Residues Lys-165 and Val-193 each coordinate FMN. 194–195 contacts substrate; it reads NS. FMN is bound by residues Gly-220, 248–249, and 270–271; these read GG and GT.

The protein belongs to the dihydroorotate dehydrogenase family. Type 1 subfamily. In terms of assembly, homodimer. The cofactor is FMN.

Its subcellular location is the cytoplasm. It carries out the reaction (S)-dihydroorotate + fumarate = orotate + succinate. Its pathway is pyrimidine metabolism; UMP biosynthesis via de novo pathway. Functionally, catalyzes the conversion of dihydroorotate to orotate with fumarate as the electron acceptor. In Streptococcus pneumoniae (strain ATCC BAA-255 / R6), this protein is Probable dihydroorotate dehydrogenase A (fumarate) (pyrDA).